The primary structure comprises 241 residues: Uracil-DNA glycosylase (241 aa).

The Proton acceptor role is filled by Asp73.

Belongs to the uracil-DNA glycosylase (UDG) superfamily. UNG family.

It is found in the cytoplasm. The catalysed reaction is Hydrolyzes single-stranded DNA or mismatched double-stranded DNA and polynucleotides, releasing free uracil.. In terms of biological role, excises uracil residues from the DNA which can arise as a result of misincorporation of dUMP residues by DNA polymerase or due to deamination of cytosine. In Agrobacterium fabrum (strain C58 / ATCC 33970) (Agrobacterium tumefaciens (strain C58)), this protein is Uracil-DNA glycosylase.